Reading from the N-terminus, the 404-residue chain is Glucose-1-phosphate adenylyltransferase (404 aa).

Residues Tyr99, Gly164, 179 to 180, and Ser197 each bind alpha-D-glucose 1-phosphate; that span reads EK.

Belongs to the bacterial/plant glucose-1-phosphate adenylyltransferase family. In terms of assembly, homotetramer.

It carries out the reaction alpha-D-glucose 1-phosphate + ATP + H(+) = ADP-alpha-D-glucose + diphosphate. Its pathway is glycan biosynthesis; glycogen biosynthesis. In terms of biological role, involved in the biosynthesis of ADP-glucose, a building block required for the elongation reactions to produce glycogen. Catalyzes the reaction between ATP and alpha-D-glucose 1-phosphate (G1P) to produce pyrophosphate and ADP-Glc. The protein is Glucose-1-phosphate adenylyltransferase of Nocardia farcinica (strain IFM 10152).